Here is a 323-residue protein sequence, read N- to C-terminus: Fatty acid desaturase 4, chloroplastic (323 aa).

The transit peptide at 1-77 directs the protein to the chloroplast; sequence MAVSLPTKYP…PRPNREKLVV (77 aa). 2 helical membrane passes run 101–121 and 131–151; these read WVAAGCTTLFVSLAKSVIGGF and LAGYAGYILADLGSGVYHWAI. The short motif at 170-173 is the Histidine box-1 element; that stretch reads QGHH. Residues 204–224 traverse the membrane as a helical segment; sequence LAFNDPVFHGFVCTFAFCILF. Positions 229 to 233 match the Histidine box-2 motif; it reads HAWAH. A Histidine box-3 motif is present at residues 258–262; the sequence is HAEHH.

It belongs to the fatty acid desaturase CarF family. Fe(2+) is required as a cofactor.

It localises to the plastid. The protein localises to the chloroplast membrane. The enzyme catalyses a 1-acyl-2-hexadecanoyl-glycerolipid + 2 reduced [2Fe-2S]-[ferredoxin] + O2 + 2 H(+) = a 1-acyl-2-[(3E)-hexadec-3-enoyl]-glycerolipid + 2 oxidized [2Fe-2S]-[ferredoxin] + 2 H2O. It functions in the pathway lipid metabolism; fatty acid metabolism. In terms of biological role, fatty acid desaturase involved in the production of chloroplast-specific phosphatidylglycerol molecular species containing 16:1(3E). Catalyzes the formation of a trans double bond introduced close to the carboxyl group of palmitic acid, which is specifically esterified to the sn-2 glyceryl carbon of phosphatidylglycerol. The sequence is that of Fatty acid desaturase 4, chloroplastic from Arabidopsis thaliana (Mouse-ear cress).